Consider the following 245-residue polypeptide: Polyhedrin (245 aa).

This sequence belongs to the polyhedrin family.

Functionally, major component of the virus occlusion bodies, which are large proteinaceous structures (polyhedra), that protect the virus from the outside environment for extended periods until they are ingested by insect larvae. The chain is Polyhedrin (PH) from Lepidoptera (butterflies and moths).